Consider the following 200-residue polypeptide: MIAHLTGLVGQMESDRCVVDVGGVGYLVHASTRTLSALPRPPDVTRVLVETVVREDAFLLYGFAEAAERDWFRLLTTVQGVGAKVALAILSALSPGDLAGVIAAADKASLTRVSGVGARLAERILTELRDKAGRMPAGPGVTIAAPPASGGVEADALLALAGLGFRRAEAQPVVGRILARLDGKADLDVVIRESLRELAR.

The interval 1 to 64 is domain I; sequence MIAHLTGLVG…EDAFLLYGFA (64 aa). The tract at residues 65-143 is domain II; sequence EAAERDWFRL…RMPAGPGVTI (79 aa). Residues 144–147 form a flexible linker region; that stretch reads AAPP. Positions 148–200 are domain III; that stretch reads ASGGVEADALLALAGLGFRRAEAQPVVGRILARLDGKADLDVVIRESLRELAR.

It belongs to the RuvA family. Homotetramer. Forms an RuvA(8)-RuvB(12)-Holliday junction (HJ) complex. HJ DNA is sandwiched between 2 RuvA tetramers; dsDNA enters through RuvA and exits via RuvB. An RuvB hexamer assembles on each DNA strand where it exits the tetramer. Each RuvB hexamer is contacted by two RuvA subunits (via domain III) on 2 adjacent RuvB subunits; this complex drives branch migration. In the full resolvosome a probable DNA-RuvA(4)-RuvB(12)-RuvC(2) complex forms which resolves the HJ.

The protein resides in the cytoplasm. In terms of biological role, the RuvA-RuvB-RuvC complex processes Holliday junction (HJ) DNA during genetic recombination and DNA repair, while the RuvA-RuvB complex plays an important role in the rescue of blocked DNA replication forks via replication fork reversal (RFR). RuvA specifically binds to HJ cruciform DNA, conferring on it an open structure. The RuvB hexamer acts as an ATP-dependent pump, pulling dsDNA into and through the RuvAB complex. HJ branch migration allows RuvC to scan DNA until it finds its consensus sequence, where it cleaves and resolves the cruciform DNA. This is Holliday junction branch migration complex subunit RuvA from Gluconacetobacter diazotrophicus (strain ATCC 49037 / DSM 5601 / CCUG 37298 / CIP 103539 / LMG 7603 / PAl5).